The following is a 137-amino-acid chain: ER-derived vesicles protein erv14 (137 aa).

The Cytoplasmic segment spans residues 1–9 (MMSFGSFVY). A helical membrane pass occupies residues 10-30 (IACLLLNGANMLLQIFCVIMF). Residues 31–62 (SDLEMDYINPIDLCNKLNDLVMPEIISHTLVT) are Extracellular-facing. The chain crosses the membrane as a helical span at residues 63-83 (LLLLLGKKWLLFLANLPLLVF). Topologically, residues 84–114 (HANQVIHKTHILDATEIFRQLGRHKRDNFIK) are cytoplasmic. The chain crosses the membrane as a helical span at residues 115–135 (VTFYLIMFFTLLYCMVMSLIQ). Topologically, residues 136-137 (EE) are extracellular.

The protein belongs to the cornichon family.

The protein localises to the endoplasmic reticulum. The protein resides in the membrane. Its subcellular location is the golgi apparatus membrane. Functionally, regulates export of the secretory proteins from the endoplasmic reticulum in COPII-coated vesicles. The sequence is that of ER-derived vesicles protein erv14 (erv14) from Schizosaccharomyces pombe (strain 972 / ATCC 24843) (Fission yeast).